The chain runs to 968 residues: Isoleucine--tRNA ligase (968 aa).

The short motif at 68–78 (PYANGALHMGH) is the 'HIGH' region element. Residue Glu-582 participates in L-isoleucyl-5'-AMP binding. The 'KMSKS' region signature appears at 623 to 627 (KMSKS). Lys-626 lines the ATP pocket. Cys-936, Cys-939, Cys-956, and Cys-959 together coordinate Zn(2+).

It belongs to the class-I aminoacyl-tRNA synthetase family. IleS type 1 subfamily. In terms of assembly, monomer. Zn(2+) is required as a cofactor.

It localises to the cytoplasm. The enzyme catalyses tRNA(Ile) + L-isoleucine + ATP = L-isoleucyl-tRNA(Ile) + AMP + diphosphate. In terms of biological role, catalyzes the attachment of isoleucine to tRNA(Ile). As IleRS can inadvertently accommodate and process structurally similar amino acids such as valine, to avoid such errors it has two additional distinct tRNA(Ile)-dependent editing activities. One activity is designated as 'pretransfer' editing and involves the hydrolysis of activated Val-AMP. The other activity is designated 'posttransfer' editing and involves deacylation of mischarged Val-tRNA(Ile). This is Isoleucine--tRNA ligase from Prochlorococcus marinus (strain MIT 9312).